The primary structure comprises 506 residues: ATP synthase subunit alpha, chloroplastic (506 aa).

170–177 (GDRQTGKT) contributes to the ATP binding site.

This sequence belongs to the ATPase alpha/beta chains family. In terms of assembly, F-type ATPases have 2 components, CF(1) - the catalytic core - and CF(0) - the membrane proton channel. CF(1) has five subunits: alpha(3), beta(3), gamma(1), delta(1), epsilon(1). CF(0) has four main subunits: a, b, b' and c.

Its subcellular location is the plastid. It localises to the chloroplast thylakoid membrane. The enzyme catalyses ATP + H2O + 4 H(+)(in) = ADP + phosphate + 5 H(+)(out). In terms of biological role, produces ATP from ADP in the presence of a proton gradient across the membrane. The alpha chain is a regulatory subunit. This chain is ATP synthase subunit alpha, chloroplastic, found in Chlorokybus atmophyticus (Soil alga).